Here is a 489-residue protein sequence, read N- to C-terminus: Rhamnulokinase (489 aa).

13-17 (ASSGR) contributes to the ATP binding site. Cysteines 68 and 222 form a disulfide. Residues glycine 83 and 236 to 238 (HDT) contribute to the substrate site. The active-site Proton acceptor is aspartate 237. An ATP-binding site is contributed by threonine 259. Asparagine 296 is a binding site for substrate. Glutamine 304 lines the ATP pocket. Cysteine 353 and cysteine 370 are joined by a disulfide. Glycine 402 serves as a coordination point for ATP. A disulfide bridge connects residues cysteine 413 and cysteine 417.

This sequence belongs to the rhamnulokinase family. Requires Mg(2+) as cofactor.

The catalysed reaction is L-rhamnulose + ATP = L-rhamnulose 1-phosphate + ADP + H(+). Its pathway is carbohydrate degradation; L-rhamnose degradation; glycerone phosphate from L-rhamnose: step 2/3. Functionally, involved in the catabolism of L-rhamnose (6-deoxy-L-mannose). Catalyzes the transfer of the gamma-phosphate group from ATP to the 1-hydroxyl group of L-rhamnulose to yield L-rhamnulose 1-phosphate. This chain is Rhamnulokinase, found in Salmonella heidelberg (strain SL476).